The chain runs to 417 residues: MGVINVQGSPSFSIHSSESNLRKSRALKKPFCSIRNRVYCAQSSSAAVDESKNITMGDSFIRPHLRQLAAYQPILPFEVLSAQLGRKPEDIVKLDANENPYGPPPEVFEALGNMKFPYVYPDPQSRRLRDALAQDSGLESEYILVGCGADELIDLIMRCVLDPGEKIIDCPPTFSMYVFDAAVNGAGVIKVPRNPDFSLNVDRIAEVVELEKPKCIFLTSPNNPDGSIISEDDLLKILEMPILVVLDEAYIEFSGVESRMKWVKKYENLIVLRTFSKRAGLAGLRVGYGAFPLSIIEYLWRAKQPYNVSVAGEVAALAALSNGKYLEDVRDALVRERERLFGLLKEVPFLNPYPSYSNFILCEVTSGMDAKKLKEDLAKMGVMVRHYNSQELKGYVRVSAGKPEHTDVLMECLKQFY.

The transit peptide at 1 to 40 (MGVINVQGSPSFSIHSSESNLRKSRALKKPFCSIRNRVYC) directs the protein to the chloroplast. Alanine 41 is modified (N-acetylalanine). An N6-(pyridoxal phosphate)lysine modification is found at lysine 277.

The protein belongs to the class-II pyridoxal-phosphate-dependent aminotransferase family. Histidinol-phosphate aminotransferase subfamily. In terms of assembly, homodimer. It depends on pyridoxal 5'-phosphate as a cofactor. As to expression, expressed in both vegetative and reproductive tissues.

Its subcellular location is the plastid. The protein resides in the chloroplast. It catalyses the reaction L-histidinol phosphate + 2-oxoglutarate = 3-(imidazol-4-yl)-2-oxopropyl phosphate + L-glutamate. It functions in the pathway amino-acid biosynthesis; L-histidine biosynthesis; L-histidine from 5-phospho-alpha-D-ribose 1-diphosphate: step 7/9. The polypeptide is Histidinol-phosphate aminotransferase 1, chloroplastic (HISN6A) (Arabidopsis thaliana (Mouse-ear cress)).